The following is a 129-amino-acid chain: MKYFVVALALVAAFACIAESKPAESEHELAEVEEENELADLEDAVWLEHLADLSDLEEARGFFGNTWKKIKGKTDKIMLKKAVKIMVKKEGISKEEAQAKVDAMSKKQIRLYLLKHYGKKALQKASEKL.

Positions 1-20 are cleaved as a signal peptide; sequence MKYFVVALALVAAFACIAES. The propeptide occupies 21–60; it reads KPAESEHELAEVEEENELADLEDAVWLEHLADLSDLEEAR.

It belongs to the cationic peptide 06 (cytoinsectotoxin) family. As to expression, expressed by the venom gland.

The protein resides in the secreted. In terms of biological role, insecticidal, cytolytic and antimicrobial peptide. Forms voltage-dependent, ion-permeable channels in membranes. At high concentration causes cell membrane lysis. The polypeptide is M-zodatoxin-Lt8j (cit 1-9) (Lachesana tarabaevi (Spider)).